The chain runs to 352 residues: Holliday junction branch migration complex subunit RuvB (352 aa).

Positions 13-201 (IPRSRKELRL…FGLCHKIEFY (189 aa)) are large ATPase domain (RuvB-L). Residues L37, R41, G82, K85, T86, T87, 148–150 (EDF), R191, Y201, and R238 each bind ATP. T86 contributes to the Mg(2+) binding site. The interval 202–273 (SNDELKQIIF…IIEKALDSQK (72 aa)) is small ATPAse domain (RuvB-S). The tract at residues 276–352 (NRGLDNVDRK…KYISSNNEKY (77 aa)) is head domain (RuvB-H). Residues R330 and R335 each coordinate DNA.

Belongs to the RuvB family. Homohexamer. Forms an RuvA(8)-RuvB(12)-Holliday junction (HJ) complex. HJ DNA is sandwiched between 2 RuvA tetramers; dsDNA enters through RuvA and exits via RuvB. An RuvB hexamer assembles on each DNA strand where it exits the tetramer. Each RuvB hexamer is contacted by two RuvA subunits (via domain III) on 2 adjacent RuvB subunits; this complex drives branch migration. In the full resolvosome a probable DNA-RuvA(4)-RuvB(12)-RuvC(2) complex forms which resolves the HJ.

Its subcellular location is the cytoplasm. It catalyses the reaction ATP + H2O = ADP + phosphate + H(+). The RuvA-RuvB-RuvC complex processes Holliday junction (HJ) DNA during genetic recombination and DNA repair, while the RuvA-RuvB complex plays an important role in the rescue of blocked DNA replication forks via replication fork reversal (RFR). RuvA specifically binds to HJ cruciform DNA, conferring on it an open structure. The RuvB hexamer acts as an ATP-dependent pump, pulling dsDNA into and through the RuvAB complex. RuvB forms 2 homohexamers on either side of HJ DNA bound by 1 or 2 RuvA tetramers; 4 subunits per hexamer contact DNA at a time. Coordinated motions by a converter formed by DNA-disengaged RuvB subunits stimulates ATP hydrolysis and nucleotide exchange. Immobilization of the converter enables RuvB to convert the ATP-contained energy into a lever motion, pulling 2 nucleotides of DNA out of the RuvA tetramer per ATP hydrolyzed, thus driving DNA branch migration. The RuvB motors rotate together with the DNA substrate, which together with the progressing nucleotide cycle form the mechanistic basis for DNA recombination by continuous HJ branch migration. Branch migration allows RuvC to scan DNA until it finds its consensus sequence, where it cleaves and resolves cruciform DNA. The chain is Holliday junction branch migration complex subunit RuvB from Prochlorococcus marinus (strain MIT 9515).